A 461-amino-acid polypeptide reads, in one-letter code: UDP-N-acetylmuramoylalanine--D-glutamate ligase (461 aa).

115–121 (GSNGKTT) lines the ATP pocket.

This sequence belongs to the MurCDEF family.

Its subcellular location is the cytoplasm. The enzyme catalyses UDP-N-acetyl-alpha-D-muramoyl-L-alanine + D-glutamate + ATP = UDP-N-acetyl-alpha-D-muramoyl-L-alanyl-D-glutamate + ADP + phosphate + H(+). It functions in the pathway cell wall biogenesis; peptidoglycan biosynthesis. Its function is as follows. Cell wall formation. Catalyzes the addition of glutamate to the nucleotide precursor UDP-N-acetylmuramoyl-L-alanine (UMA). The protein is UDP-N-acetylmuramoylalanine--D-glutamate ligase of Acidobacterium capsulatum (strain ATCC 51196 / DSM 11244 / BCRC 80197 / JCM 7670 / NBRC 15755 / NCIMB 13165 / 161).